Here is a 1056-residue protein sequence, read N- to C-terminus: Carbamoyl phosphate synthase large chain (1056 aa).

The interval 1–397 is carboxyphosphate synthetic domain; the sequence is MPKKSHIKKV…AFKKALRSLD (397 aa). ATP is bound by residues R127, R167, G173, G174, E206, V208, E213, G239, I240, H241, Q282, and E294. The 193-residue stretch at 131–323 folds into the ATP-grasp 1 domain; it reads RDLMNAIGEP…IARVAAKIAI (193 aa). The Mg(2+) site is built by Q282, E294, and N296. The Mn(2+) site is built by Q282, E294, and N296. Residues 398–530 are oligomerization domain; the sequence is NDMQQHTNPS…YSTWEEGCEL (133 aa). Residues 531–920 form a carbamoyl phosphate synthetic domain region; it reads VRDSAKKVLI…YKACTAADNT (390 aa). The 192-residue stretch at 662–853 folds into the ATP-grasp 2 domain; that stretch reads SRLLTRLEIP…LAKIAAKVMV (192 aa). 10 residues coordinate ATP: R698, S737, L739, E744, G769, V770, H771, S772, Q812, and E824. 3 residues coordinate Mg(2+): Q812, E824, and N826. Positions 812, 824, and 826 each coordinate Mn(2+). The MGS-like domain occupies 919-1056; the sequence is NTLPTTGNVF…EPLGHYHGLM (138 aa). The segment at 921–1056 is allosteric domain; the sequence is LPTTGNVFIS…EPLGHYHGLM (136 aa).

It belongs to the CarB family. Composed of two chains; the small (or glutamine) chain promotes the hydrolysis of glutamine to ammonia, which is used by the large (or ammonia) chain to synthesize carbamoyl phosphate. Tetramer of heterodimers (alpha,beta)4. Mg(2+) is required as a cofactor. The cofactor is Mn(2+).

It catalyses the reaction hydrogencarbonate + L-glutamine + 2 ATP + H2O = carbamoyl phosphate + L-glutamate + 2 ADP + phosphate + 2 H(+). It carries out the reaction hydrogencarbonate + NH4(+) + 2 ATP = carbamoyl phosphate + 2 ADP + phosphate + 2 H(+). Its pathway is amino-acid biosynthesis; L-arginine biosynthesis; carbamoyl phosphate from bicarbonate: step 1/1. The protein operates within pyrimidine metabolism; UMP biosynthesis via de novo pathway; (S)-dihydroorotate from bicarbonate: step 1/3. Large subunit of the glutamine-dependent carbamoyl phosphate synthetase (CPSase). CPSase catalyzes the formation of carbamoyl phosphate from the ammonia moiety of glutamine, carbonate, and phosphate donated by ATP, constituting the first step of 2 biosynthetic pathways, one leading to arginine and/or urea and the other to pyrimidine nucleotides. The large subunit (synthetase) binds the substrates ammonia (free or transferred from glutamine from the small subunit), hydrogencarbonate and ATP and carries out an ATP-coupled ligase reaction, activating hydrogencarbonate by forming carboxy phosphate which reacts with ammonia to form carbamoyl phosphate. This chain is Carbamoyl phosphate synthase large chain, found in Methanoculleus marisnigri (strain ATCC 35101 / DSM 1498 / JR1).